The following is a 533-amino-acid chain: tRNA(Ile)-lysidine synthase (533 aa).

ATP is bound at residue serine 21–serine 26. Residues aspartate 377–valine 500 form the CMP/dCMP-type deaminase domain.

It belongs to the tRNA(Ile)-lysidine synthase family.

It is found in the cytoplasm. The enzyme catalyses cytidine(34) in tRNA(Ile2) + L-lysine + ATP = lysidine(34) in tRNA(Ile2) + AMP + diphosphate + H(+). Its function is as follows. Ligates lysine onto the cytidine present at position 34 of the AUA codon-specific tRNA(Ile) that contains the anticodon CAU, in an ATP-dependent manner. Cytidine is converted to lysidine, thus changing the amino acid specificity of the tRNA from methionine to isoleucine. The polypeptide is tRNA(Ile)-lysidine synthase (Deinococcus deserti (strain DSM 17065 / CIP 109153 / LMG 22923 / VCD115)).